The chain runs to 1400 residues: DNA-directed RNA polymerase subunit beta' (1400 aa).

The Zn(2+) site is built by Cys70, Cys72, Cys85, and Cys88. Residues Asp460, Asp462, and Asp464 each contribute to the Mg(2+) site. Cys814, Cys887, Cys894, and Cys897 together coordinate Zn(2+).

Belongs to the RNA polymerase beta' chain family. The RNAP catalytic core consists of 2 alpha, 1 beta, 1 beta' and 1 omega subunit. When a sigma factor is associated with the core the holoenzyme is formed, which can initiate transcription. It depends on Mg(2+) as a cofactor. Zn(2+) is required as a cofactor.

It carries out the reaction RNA(n) + a ribonucleoside 5'-triphosphate = RNA(n+1) + diphosphate. Functionally, DNA-dependent RNA polymerase catalyzes the transcription of DNA into RNA using the four ribonucleoside triphosphates as substrates. The protein is DNA-directed RNA polymerase subunit beta' of Marinomonas sp. (strain MWYL1).